Reading from the N-terminus, the 239-residue chain is Ribosomal RNA small subunit methyltransferase G (239 aa).

Residues glycine 77, phenylalanine 82, 128-129 (AE), and arginine 146 contribute to the S-adenosyl-L-methionine site. A disordered region spans residues 215-239 (DKKRQTPKKYPRKPGTPNKTPLLEK).

Belongs to the methyltransferase superfamily. RNA methyltransferase RsmG family.

Its subcellular location is the cytoplasm. Specifically methylates the N7 position of guanine in position 535 of 16S rRNA. This chain is Ribosomal RNA small subunit methyltransferase G, found in Staphylococcus aureus (strain bovine RF122 / ET3-1).